The primary structure comprises 254 residues: Ribosomal RNA small subunit methyltransferase J (254 aa).

S-adenosyl-L-methionine is bound by residues Arg107 to Asp108, Glu123 to Arg124, and Asp177.

Belongs to the methyltransferase superfamily. RsmJ family.

The protein localises to the cytoplasm. The enzyme catalyses guanosine(1516) in 16S rRNA + S-adenosyl-L-methionine = N(2)-methylguanosine(1516) in 16S rRNA + S-adenosyl-L-homocysteine + H(+). Specifically methylates the guanosine in position 1516 of 16S rRNA. The chain is Ribosomal RNA small subunit methyltransferase J from Histophilus somni (strain 2336) (Haemophilus somnus).